Reading from the N-terminus, the 49-residue chain is U6-myrmicitoxin-Mri1a (49 aa).

Positions 1–27 (MNPKALCSFLLATFLLLTVTIMPSVHA) are cleaved as a signal peptide. A propeptide spanning residues 28 to 35 (NAEANADA) is cleaved from the precursor.

In terms of processing, contains 1 disulfide bond. As to expression, expressed by the venom gland.

It localises to the secreted. The chain is U6-myrmicitoxin-Mri1a from Manica rubida (European giant red ant).